Here is a 172-residue protein sequence, read N- to C-terminus: HTH-type transcriptional regulator IscR (172 aa).

One can recognise an HTH rrf2-type domain in the interval 2-131 (RLTSKGRYAV…NNITLGELMR (130 aa)). The H-T-H motif DNA-binding region spans 28–51 (LADISERQGISLSYLEQLFSRLRK). The [2Fe-2S] cluster site is built by cysteine 92, cysteine 98, and cysteine 104.

[2Fe-2S] cluster serves as cofactor.

Its function is as follows. Regulates the transcription of several operons and genes involved in the biogenesis of Fe-S clusters and Fe-S-containing proteins. The polypeptide is HTH-type transcriptional regulator IscR (Photobacterium profundum (strain SS9)).